A 400-amino-acid polypeptide reads, in one-letter code: Lysophospholipid transporter LplT (400 aa).

A run of 11 helical transmembrane segments spans residues 19 to 39 (VIVA…ATLA), 53 to 73 (VLQM…GQIA), 91 to 111 (AGAA…LVGI), 139 to 159 (LMEA…GVLA), 164 to 184 (IAAL…NLFI), 227 to 247 (LFWG…PVAL), 257 to 277 (YLNA…AKLV), 281 to 301 (TVSR…IFSL), 304 to 324 (ALLP…FFVV), 352 to 372 (NSAM…GVPA), and 373 to 393 (VAIG…LWIW).

This sequence belongs to the major facilitator superfamily. LplT (TC 2.A.1.42) family.

It is found in the cell inner membrane. Its function is as follows. Catalyzes the facilitated diffusion of 2-acyl-glycero-3-phosphoethanolamine (2-acyl-GPE) into the cell. The chain is Lysophospholipid transporter LplT from Salmonella gallinarum (strain 287/91 / NCTC 13346).